We begin with the raw amino-acid sequence, 311 residues long: Formimidoylglutamase (311 aa).

Residues His122, Asp151, His153, Asp155, Cys242, and Asp244 each coordinate Mn(2+).

The protein belongs to the arginase family. Mn(2+) serves as cofactor.

The enzyme catalyses N-formimidoyl-L-glutamate + H2O = formamide + L-glutamate. Its pathway is amino-acid degradation; L-histidine degradation into L-glutamate; L-glutamate from N-formimidoyl-L-glutamate (hydrolase route): step 1/1. In terms of biological role, catalyzes the conversion of N-formimidoyl-L-glutamate to L-glutamate and formamide. In Pseudomonas paraeruginosa (strain DSM 24068 / PA7) (Pseudomonas aeruginosa (strain PA7)), this protein is Formimidoylglutamase.